The following is a 359-amino-acid chain: Cytoplasmic tRNA 2-thiolation protein 2 (359 aa).

It belongs to the CTU2/NCS2 family.

The protein resides in the cytoplasm. The protein operates within tRNA modification; 5-methoxycarbonylmethyl-2-thiouridine-tRNA biosynthesis. In terms of biological role, plays a central role in 2-thiolation of mcm(5)S(2)U at tRNA wobble positions of tRNA(Lys), tRNA(Glu) and tRNA(Gln). May act by forming a heterodimer with NCS6 that ligates sulfur from thiocarboxylated URM1 onto the uridine of tRNAs at wobble position. Prior mcm(5) tRNA modification by the elongator complex is required for 2-thiolation. May also be involved in protein urmylation. The chain is Cytoplasmic tRNA 2-thiolation protein 2 from Ajellomyces capsulatus (strain NAm1 / WU24) (Darling's disease fungus).